The following is a 142-amino-acid chain: Hemoglobin subunit alpha (142 aa).

Residue S1 is modified to N-acetylserine. In terms of domain architecture, Globin spans 1 to 142 (SLSDKDKAAV…LSLALAEKYR (142 aa)). Heme b contacts are provided by H59 and H88.

It belongs to the globin family. In terms of assembly, heterotetramer of two alpha chains and two beta chains. Red blood cells.

Involved in oxygen transport from gills to the various peripheral tissues. This Lycodes reticulatus (Arctic eelpout) protein is Hemoglobin subunit alpha.